The sequence spans 100 residues: MSWYSFGNDRSLLILKLYVQPGARQTEAVGICGEELKIKLAALPVDGKANRALTEFLAKRFNVPRKNITLKRGEQSRHKVVEVCQSSNGPEVLFSEMRAE.

The protein belongs to the UPF0235 family.

This chain is UPF0235 protein NE0395, found in Nitrosomonas europaea (strain ATCC 19718 / CIP 103999 / KCTC 2705 / NBRC 14298).